The sequence spans 169 residues: uncharacterized protein (169 aa).

Helical transmembrane passes span 10-30 (NVHMYDVAIILILIIVVFKLI) and 149-169 (IPLAFVQMIAISIALICLLIP).

It localises to the membrane. This is an uncharacterized protein from Dictyostelium discoideum (Social amoeba).